The following is a 552-amino-acid chain: Putative transport protein HAPS_0158 (552 aa).

5 helical membrane-spanning segments follow: residues 4 to 24 (IALT…IGHI), 28 to 48 (GVSL…HFMT), 65 to 85 (FGLI…FFAS), 95 to 115 (AFAV…HKIF), and 157 to 177 (MGYA…MWLI). 2 consecutive RCK C-terminal domains span residues 193–275 (DSAT…ILGE) and 277–360 (VNVS…IIGN). The next 6 membrane-spanning stretches (helical) occupy residues 370–390 (MLPI…PIYL), 393–413 (FPVA…LILA), 438–458 (IVLF…NTLL), 463–483 (LAWI…TGLV), 492–512 (YLSL…LAFA), and 532–552 (LVMF…WVAG).

Belongs to the AAE transporter (TC 2.A.81) family. YidE subfamily.

The protein localises to the cell membrane. The chain is Putative transport protein HAPS_0158 from Glaesserella parasuis serovar 5 (strain SH0165) (Haemophilus parasuis).